We begin with the raw amino-acid sequence, 612 residues long: Probable serine/threonine-protein kinase WNK4 (612 aa).

The 258-residue stretch at 25 to 282 (IRYNEVLGRG…AKELLQDPFL (258 aa)) folds into the Protein kinase domain. Residues 105-108 (TELF) and Lys155 contribute to the ATP site. The Proton acceptor role is filled by Asp172.

This sequence belongs to the protein kinase superfamily. Ser/Thr protein kinase family. WNK subfamily.

It carries out the reaction L-seryl-[protein] + ATP = O-phospho-L-seryl-[protein] + ADP + H(+). It catalyses the reaction L-threonyl-[protein] + ATP = O-phospho-L-threonyl-[protein] + ADP + H(+). This is Probable serine/threonine-protein kinase WNK4 (WNK4) from Oryza sativa subsp. japonica (Rice).